Reading from the N-terminus, the 21-residue chain is Peptide Hact-2 (21 aa).

3 disulfide bridges follow: Cys-1-Cys-18, Cys-5-Cys-14, and Cys-9-Cys-20.

As to expression, expressed in tentacles.

It localises to the nematocyst. It is found in the secreted. Functionally, peptide of unknown function. Does not exhibit antimicrobial activity against Escherichia coli and Staphylococcus aureus. Promotes cell proliferation of human fibroblast skin cells. Does not exhibit any effect on voltage-gated ion channels, including potassium, sodium, and calcium channels. The sequence is that of Peptide Hact-2 from Heliofungia actiniformis (Mushroom coral).